An 839-amino-acid chain; its full sequence is Protein translocase subunit SecA (839 aa).

ATP-binding positions include Gln86, 104–108, and Asp493; that span reads GEGKT. The interval 794-839 is disordered; the sequence is GIDMDNLQTSGPSDRPDPETSGDADPKNRAQRRAQEQERKRQNKKQ. Basic and acidic residues predominate over residues 807–833; the sequence is DRPDPETSGDADPKNRAQRRAQEQERK.

Belongs to the SecA family. In terms of assembly, monomer and homodimer. Part of the essential Sec protein translocation apparatus which comprises SecA, SecYEG and auxiliary proteins SecDF. Other proteins may also be involved.

The protein resides in the cell membrane. It is found in the cytoplasm. It carries out the reaction ATP + H2O + cellular proteinSide 1 = ADP + phosphate + cellular proteinSide 2.. Its function is as follows. Part of the Sec protein translocase complex. Interacts with the SecYEG preprotein conducting channel. Has a central role in coupling the hydrolysis of ATP to the transfer of proteins into and across the cell membrane, serving as an ATP-driven molecular motor driving the stepwise translocation of polypeptide chains across the membrane. In Brevibacillus brevis (strain 47 / JCM 6285 / NBRC 100599), this protein is Protein translocase subunit SecA.